Here is a 449-residue protein sequence, read N- to C-terminus: Glycerol-3-phosphate acyltransferase 3 (449 aa).

The next 3 membrane-spanning stretches (helical) occupy residues 9–29 (FVLL…PAMF), 146–166 (ISVR…CVLL), and 170–190 (ITLA…VGFL). The HXXXXD motif signature appears at 238–243 (HTSPID). Residues 358-378 (MVSYILRMMTSWAIVCNVWYL) form a helical membrane-spanning segment.

Belongs to the 1-acyl-sn-glycerol-3-phosphate acyltransferase family.

Its subcellular location is the endoplasmic reticulum membrane. The catalysed reaction is sn-glycerol 3-phosphate + an acyl-CoA = a 1-acyl-sn-glycero-3-phosphate + CoA. The enzyme catalyses a 1-acyl-sn-glycero-3-phosphate + an acyl-CoA = a 1,2-diacyl-sn-glycero-3-phosphate + CoA. It carries out the reaction dodecanoyl-CoA + sn-glycerol 3-phosphate = 1-dodecanoyl-sn-glycerol 3-phosphate + CoA. It catalyses the reaction sn-glycerol 3-phosphate + hexadecanoyl-CoA = 1-hexadecanoyl-sn-glycero-3-phosphate + CoA. The catalysed reaction is sn-glycerol 3-phosphate + (9Z)-octadecenoyl-CoA = 1-(9Z-octadecenoyl)-sn-glycero-3-phosphate + CoA. The enzyme catalyses (9Z,12Z)-octadecadienoyl-CoA + sn-glycerol 3-phosphate = 1-(9Z,12Z)-octadecadienoyl-sn-glycero-3-phosphate + CoA. It carries out the reaction 1-tetradecanoyl-sn-glycerol 3-phosphate + (9Z)-octadecenoyl-CoA = 1-tetradecanoyl-2-(9Z)-octadecenoyl-sn-glycero-3-phosphate + CoA. It catalyses the reaction 1-hexadecanoyl-sn-glycero-3-phosphate + (9Z)-octadecenoyl-CoA = 1-hexadecanoyl-2-(9Z-octadecenoyl)-sn-glycero-3-phosphate + CoA. The catalysed reaction is 1-(9Z-octadecenoyl)-sn-glycero-3-phosphate + (9Z)-octadecenoyl-CoA = 1,2-di-(9Z-octadecenoyl)-sn-glycero-3-phosphate + CoA. The enzyme catalyses 1-(6Z,9Z,12Z-octadecatrienoyl)-sn-glycero-3-phosphate + (9Z)-octadecenoyl-CoA = (6Z,9Z,12Z)-octadecatrienoyl-2-(9Z)-octadecenoyl-sn-glycero-3-phosphate + CoA. It carries out the reaction 1-(9Z,12Z,15Z)-octadecatrienoyl-sn-glycero-3-phosphate + (9Z)-octadecenoyl-CoA = 1-(9Z,12Z,15Z)-octadecatrienoyl-2-(9Z)-octadecenoyl-sn-glycero-3-phosphate + CoA. It catalyses the reaction 1-(9Z-octadecenoyl)-sn-glycero-3-phosphate + tetradecanoyl-CoA = 1-(9Z)-octadecenoyl-2-tetradecanoyl-sn-glycero-3-phosphate + CoA. The catalysed reaction is 1-(9Z-octadecenoyl)-sn-glycero-3-phosphate + hexadecanoyl-CoA = 1-(9Z)-octadecenoyl-2-hexadecanoyl-sn-glycero-3-phosphate + CoA. The enzyme catalyses 1-(9Z-octadecenoyl)-sn-glycero-3-phosphate + octadecanoyl-CoA = 1-(9Z-octadecenoyl)-2-octadecanoyl-sn-glycero-3-phosphate + CoA. It carries out the reaction 1-(9Z-octadecenoyl)-sn-glycero-3-phosphate + (9Z,12Z)-octadecadienoyl-CoA = 1-(9Z)-octadecenoyl-2-(9Z,12Z)-octadecadienoyl-sn-glycero-3-phosphate + CoA. It catalyses the reaction 1-(5Z,8Z,11Z,14Z-eicosatetraenoyl)-sn-glycero-3-phosphate + (9Z)-octadecenoyl-CoA = 1-(5Z,8Z,11Z,14Z)-eicosatetraenoyl-2-(9Z)-octadecenoyl-sn-glycero-3-phosphate + CoA. The protein operates within glycerolipid metabolism; triacylglycerol biosynthesis. It participates in phospholipid metabolism; CDP-diacylglycerol biosynthesis; CDP-diacylglycerol from sn-glycerol 3-phosphate: step 1/3. Its function is as follows. Converts glycerol-3-phosphate to 1-acyl-sn-glycerol-3-phosphate (lysophosphatidic acid or LPA) by incorporating an acyl moiety at the sn-1 position of the glycerol backbone. Also converts LPA into 1,2-diacyl-sn-glycerol-3-phosphate (phosphatidic acid or PA) by incorporating an acyl moiety at the sn-2 position of the glycerol backbone. Protects cells against lipotoxicity. The polypeptide is Glycerol-3-phosphate acyltransferase 3 (Danio rerio (Zebrafish)).